A 165-amino-acid chain; its full sequence is Chorismate pyruvate-lyase (165 aa).

The substrate site is built by methionine 35, arginine 77, leucine 115, and glutamate 156.

This sequence belongs to the UbiC family. In terms of assembly, monomer.

It is found in the cytoplasm. The enzyme catalyses chorismate = 4-hydroxybenzoate + pyruvate. It participates in cofactor biosynthesis; ubiquinone biosynthesis. Removes the pyruvyl group from chorismate, with concomitant aromatization of the ring, to provide 4-hydroxybenzoate (4HB) for the ubiquinone pathway. This is Chorismate pyruvate-lyase from Shigella boydii serotype 18 (strain CDC 3083-94 / BS512).